Reading from the N-terminus, the 69-residue chain is Cytochrome c oxidase subunit 8A, mitochondrial (69 aa).

The N-terminal 25 residues, 1-25, are a transit peptide targeting the mitochondrion; the sequence is MSVLTSLLLRGLTGSARRLPVPRAK. An SIFI-degron motif is present at residues 2 to 19; sequence SVLTSLLLRGLTGSARRL. Over 26–36 the chain is Mitochondrial matrix; the sequence is VHSMPPEEELG. A helical membrane pass occupies residues 37-60; sequence TLEKAIALTSCFVSLFLPAGWILS. Residues 61 to 69 lie on the Mitochondrial intermembrane side of the membrane; sequence HLEDYKRPE.

It belongs to the cytochrome c oxidase VIII family. Component of the cytochrome c oxidase (complex IV, CIV), a multisubunit enzyme composed of 14 subunits. The complex is composed of a catalytic core of 3 subunits MT-CO1, MT-CO2 and MT-CO3, encoded in the mitochondrial DNA, and 11 supernumerary subunits COX4I, COX5A, COX5B, COX6A, COX6B, COX6C, COX7A, COX7B, COX7C, COX8 and NDUFA4, which are encoded in the nuclear genome. The complex exists as a monomer or a dimer and forms supercomplexes (SCs) in the inner mitochondrial membrane with NADH-ubiquinone oxidoreductase (complex I, CI) and ubiquinol-cytochrome c oxidoreductase (cytochrome b-c1 complex, complex III, CIII), resulting in different assemblies (supercomplex SCI(1)III(2)IV(1) and megacomplex MCI(2)III(2)IV(2)). In terms of processing, in response to mitochondrial stress, the precursor protein is ubiquitinated by the SIFI complex in the cytoplasm before mitochondrial import, leading to its degradation. Within the SIFI complex, UBR4 initiates ubiquitin chain that are further elongated or branched by KCMF1.

Its subcellular location is the mitochondrion inner membrane. It participates in energy metabolism; oxidative phosphorylation. Component of the cytochrome c oxidase, the last enzyme in the mitochondrial electron transport chain which drives oxidative phosphorylation. The respiratory chain contains 3 multisubunit complexes succinate dehydrogenase (complex II, CII), ubiquinol-cytochrome c oxidoreductase (cytochrome b-c1 complex, complex III, CIII) and cytochrome c oxidase (complex IV, CIV), that cooperate to transfer electrons derived from NADH and succinate to molecular oxygen, creating an electrochemical gradient over the inner membrane that drives transmembrane transport and the ATP synthase. Cytochrome c oxidase is the component of the respiratory chain that catalyzes the reduction of oxygen to water. Electrons originating from reduced cytochrome c in the intermembrane space (IMS) are transferred via the dinuclear copper A center (CU(A)) of subunit 2 and heme A of subunit 1 to the active site in subunit 1, a binuclear center (BNC) formed by heme A3 and copper B (CU(B)). The BNC reduces molecular oxygen to 2 water molecules using 4 electrons from cytochrome c in the IMS and 4 protons from the mitochondrial matrix. This Papio anubis (Olive baboon) protein is Cytochrome c oxidase subunit 8A, mitochondrial (COX8A).